A 590-amino-acid polypeptide reads, in one-letter code: MRTRFLFLTSGCKAVPELHKIVLANAAPVKNPEIRYASTENRNYYITTPIFYVNASPHLGHLYSAVIADCFHRHKQLQGFNSRFATGTDEHGLKIQQAAEAAGKEPLEFCTTVSERFRHLFSSCNISNTDYIRTTEQRHHRAVQHFWSVLCSKGLIYKGSYEGWYSTQDESFLTPSQVTTALDSTGKEIKVSLESGHKVEWMKEENYMFRLSGFRSQLLDWLRENPRAIQPERFHHSVLQWLQEELPDLSVSRQKSRLQWGIPVPEDDGQTIYVWLDALVNYLTVVGYPNNHERWWNVAHHIIGKDILKFHAIYWPSFLLGAGLPLPQTIHVHSHWTVAGKKMSKSLGNVIDPQERSQLFTTDGLRYFLLRQGVPDTDCDYRDDKVVKLLNAELADALGGLLNRCTATALNPAQVYASFCPDSFPRERGGRADDDDYRMLESVRHLPAVVEQHFEDMHVYKALEAVSTCVRQTNGFVQRHAPWKLDRKDSADQRWLGTIIHVSLECLRIYGTLLQPVVPEISNKLLSRLGVQPHERSWTNLNFLPRFEGKDCPFEGRALGSDSGVLFSRLESQRADQQKNRKMEKGSNLK.

A mitochondrion-targeting transit peptide spans 1–26 (MRTRFLFLTSGCKAVPELHKIVLANA). The short motif at 51-61 (FYVNASPHLGH) is the 'HIGH' region element. Positions 342–346 (KMSKS) match the 'KMSKS' region motif. Lysine 345 contributes to the ATP binding site. The disordered stretch occupies residues 570 to 590 (LESQRADQQKNRKMEKGSNLK). Residues 571–590 (ESQRADQQKNRKMEKGSNLK) show a composition bias toward basic and acidic residues.

Belongs to the class-I aminoacyl-tRNA synthetase family.

The protein resides in the mitochondrion matrix. It catalyses the reaction tRNA(Met) + L-methionine + ATP = L-methionyl-tRNA(Met) + AMP + diphosphate. This Takifugu rubripes (Japanese pufferfish) protein is Methionine--tRNA ligase, mitochondrial (mars2).